Consider the following 308-residue polypeptide: Transaldolase (308 aa).

K125 acts as the Schiff-base intermediate with substrate in catalysis.

This sequence belongs to the transaldolase family. Type 1 subfamily. Homodimer.

It localises to the cytoplasm. It carries out the reaction D-sedoheptulose 7-phosphate + D-glyceraldehyde 3-phosphate = D-erythrose 4-phosphate + beta-D-fructose 6-phosphate. It participates in carbohydrate degradation; pentose phosphate pathway; D-glyceraldehyde 3-phosphate and beta-D-fructose 6-phosphate from D-ribose 5-phosphate and D-xylulose 5-phosphate (non-oxidative stage): step 2/3. Transaldolase is important for the balance of metabolites in the pentose-phosphate pathway. The polypeptide is Transaldolase (Pseudomonas fluorescens (strain ATCC BAA-477 / NRRL B-23932 / Pf-5)).